Consider the following 520-residue polypeptide: 3-phosphoshikimate 1-carboxyvinyltransferase, chloroplastic (520 aa).

A chloroplast-targeting transit peptide spans 1–76 (MAQVSRICNG…KVMSSVSTAE (76 aa)). The interval 20-39 (LSKSSQRKSPLSVSLKTQQH) is disordered. Residues Lys99, Ser100, and Arg104 each contribute to the 3-phosphoshikimate site. Lys99 lines the phosphoenolpyruvate pocket. Positions 177 and 207 each coordinate phosphoenolpyruvate. 6 residues coordinate 3-phosphoshikimate: Ser254, Ser255, Gln256, Ser282, Asp407, and Lys434. Position 256 (Gln256) interacts with phosphoenolpyruvate. Residue Asp407 is the Proton acceptor of the active site. Phosphoenolpyruvate-binding residues include Arg438, Arg480, and Lys505.

Belongs to the EPSP synthase family.

The protein resides in the plastid. The protein localises to the chloroplast. It catalyses the reaction 3-phosphoshikimate + phosphoenolpyruvate = 5-O-(1-carboxyvinyl)-3-phosphoshikimate + phosphate. Its pathway is metabolic intermediate biosynthesis; chorismate biosynthesis; chorismate from D-erythrose 4-phosphate and phosphoenolpyruvate: step 6/7. Functionally, catalyzes the transfer of the enolpyruvyl moiety of phosphoenolpyruvate (PEP) to the 5-hydroxyl of shikimate-3-phosphate (S3P) to produce enolpyruvyl shikimate-3-phosphate and inorganic phosphate. This Arabidopsis thaliana (Mouse-ear cress) protein is 3-phosphoshikimate 1-carboxyvinyltransferase, chloroplastic.